The primary structure comprises 542 residues: Membrane protein insertase YidC (542 aa).

5 helical membrane passes run leucine 7–phenylalanine 27, phenylalanine 338–valine 358, methionine 417–phenylalanine 437, leucine 455–leucine 475, and phenylalanine 494–tryptophan 514.

The protein belongs to the OXA1/ALB3/YidC family. Type 1 subfamily. As to quaternary structure, interacts with the Sec translocase complex via SecD. Specifically interacts with transmembrane segments of nascent integral membrane proteins during membrane integration.

The protein resides in the cell inner membrane. Required for the insertion and/or proper folding and/or complex formation of integral membrane proteins into the membrane. Involved in integration of membrane proteins that insert both dependently and independently of the Sec translocase complex, as well as at least some lipoproteins. Aids folding of multispanning membrane proteins. The polypeptide is Membrane protein insertase YidC (Actinobacillus pleuropneumoniae serotype 3 (strain JL03)).